Here is a 382-residue protein sequence, read N- to C-terminus: Methylthioribose-1-phosphate isomerase (382 aa).

The Proton donor role is filled by D257.

This sequence belongs to the eIF-2B alpha/beta/delta subunits family. MtnA subfamily.

The protein localises to the cytoplasm. It localises to the nucleus. It carries out the reaction 5-(methylsulfanyl)-alpha-D-ribose 1-phosphate = 5-(methylsulfanyl)-D-ribulose 1-phosphate. It functions in the pathway amino-acid biosynthesis; L-methionine biosynthesis via salvage pathway; L-methionine from S-methyl-5-thio-alpha-D-ribose 1-phosphate: step 1/6. Functionally, catalyzes the interconversion of methylthioribose-1-phosphate (MTR-1-P) into methylthioribulose-1-phosphate (MTRu-1-P). In Paracoccidioides brasiliensis (strain Pb18), this protein is Methylthioribose-1-phosphate isomerase.